The primary structure comprises 693 residues: MSEGRCSVAHMSSVVAPAKEANAMGPKAVELVLVKEQNGVQLTNSTLLNPPQSPTEAQDRETWSKKADFLLSVIGFAVDLANVWRFPYLCYKNGGGAFLVPYLFFMVVAGVPLFYMELALGQFNREGAAGVWKICPILRGVGYTAILISLYIGFFYNVIIAWALHYLLSSFTTELPWTHCNHSWNSPRCSDARAPNASSGPNGTSRTTPAAEYFERGVLHLHESQGIDDLGPPRWQLTSCLVLVIVLLYFSLWKGVKTSGKVVWITATMPYVVLFALLLRGITLPGAVDAIRAYLSVDFHRLCEASVWIDAAIQICFSLGVGLGVLIAFSSYNKFTNNCYRDAIITTSVNSLTSFSSGFVVFSFLGYMAQKHSVPIGDVAKDGPGLIFIIYPEALATLPLSSVWAVVFFVMLLTLGIDSAMGGMESVITGLADEFQLLHRHRELFTLLVVLATFLLSLFCVTNGGIYVFTLLDHFAAGTSILFGVLMEVIGVAWFYGVWQFSDDIKQMTGRRPSLYWRLCWKFVSPCFLLFVVVVSIATFRPPHYGAYVFPEWATALGWAIAASSMSVVPIYAAYKLCSLPGSSREKLAYAITPETEHGRVDSGGGAPVHAPPLARGVGRWRKRKSCWVPSRGPGRGGPPTPSPRLAGHTRAFPWTGAPPVPRELTPPSTCRCVPPLVCAHPAVESTGLCSVY.

The Cytoplasmic portion of the chain corresponds to 1–56 (MSEGRCSVAHMSSVVAPAKEANAMGPKAVELVLVKEQNGVQLTNSTLLNPPQSPTE). Residues 57–95 (AQDRETWSKKADFLLSVIGFAVDLANVWRFPYLCYKNGG) traverse the membrane as a discontinuously helical segment. Gly-75, Ala-77, Val-78, Asp-79, and Asn-82 together coordinate Na(+). Asp-79 contacts dopamine. 2 helical membrane-spanning segments follow: residues 96 to 127 (GAFL…NREG) and 128 to 171 (AAGV…LSSF). Positions 149 and 153 each coordinate dopamine. Residues 172–233 (TTELPWTHCN…SQGIDDLGPP (62 aa)) lie on the Extracellular side of the membrane. Cys-180 and Cys-189 are joined by a disulfide. 3 N-linked (GlcNAc...) asparagine glycosylation sites follow: Asn-181, Asn-196, and Asn-202. Helical transmembrane passes span 234 to 253 (RWQL…FSLW) and 254 to 284 (KGVK…GITL). Residues 285–303 (PGAVDAIRAYLSVDFHRLC) are Extracellular-facing. The chain crosses the membrane as a discontinuously helical span at residues 304–332 (EASVWIDAAIQICFSLGVGLGVLIAFSSY). Gln-314 contributes to the chloride binding site. Phe-317 serves as a coordination point for dopamine. The Na(+) site is built by Ser-318 and Asn-350. Ser-318 contributes to the chloride binding site. A helical membrane pass occupies residues 333-373 (NKFTNNCYRDAIITTSVNSLTSFSSGFVVFSFLGYMAQKHS). Residue Ser-354 participates in chloride binding. Over 374-397 (VPIGDVAKDGPGLIFIIYPEALAT) the chain is Extracellular. 3 consecutive transmembrane segments (helical) span residues 398 to 439 (LPLS…QLLH), 440 to 463 (RHRE…CVTN), and 464 to 496 (GGIY…AWFY). Na(+) contacts are provided by Leu-415, Asp-418, and Ser-419. Residues Ser-419 and Ala-420 each contribute to the dopamine site. Residues 497–513 (GVWQFSDDIKQMTGRRP) are Cytoplasmic-facing. A helical transmembrane segment spans residues 514 to 539 (SLYWRLCWKFVSPCFLLFVVVVSIAT). Over 540–550 (FRPPHYGAYVF) the chain is Extracellular. A helical membrane pass occupies residues 551–580 (PEWATALGWAIAASSMSVVPIYAAYKLCSL). The segment at 558–587 (GWAIAASSMSVVPIYAAYKLCSLPGSSREK) is interaction with TGFB1I1. Topologically, residues 581-693 (PGSSREKLAY…VESTGLCSVY (113 aa)) are cytoplasmic.

Belongs to the sodium:neurotransmitter symporter (SNF) (TC 2.A.22) family. SLC6A3 subfamily. Monomer. Homooligomer; disulfide-linked. Interacts with PRKCABP and TGFB1I1. Interacts (via N-terminus) with SYNGR3 (via N-terminus). Interacts with SLC18A2. Interacts with TOR1A (ATP-bound); TOR1A regulates SLC6A3 subcellular location. Interacts with alpha-synuclein/SNCA. Interacts with SEPTIN4. In terms of tissue distribution, expressed in the neurons of the substantia nigra of the brain.

The protein resides in the cell membrane. It localises to the cell projection. It is found in the neuron projection. The protein localises to the axon. It carries out the reaction dopamine(out) + chloride(out) + Na(+)(out) = dopamine(in) + chloride(in) + Na(+)(in). The enzyme catalyses (R)-noradrenaline(out) + chloride(out) + Na(+)(out) = (R)-noradrenaline(in) + chloride(in) + Na(+)(in). The catalysed reaction is dopamine(out) + chloride(out) + 2 Na(+)(out) = dopamine(in) + chloride(in) + 2 Na(+)(in). Inhibited by GBR 12909 dihydrochloride, amphetamine and cocaine. Inhibited by zinc ions. Mediates sodium- and chloride-dependent transport of dopamine. Also mediates sodium- and chloride-dependent transport of norepinephrine (also known as noradrenaline). Regulator of light-dependent retinal hyaloid vessel regression, downstream of OPN5 signaling. The sequence is that of Sodium-dependent dopamine transporter (SLC6A3) from Bos taurus (Bovine).